Consider the following 259-residue polypeptide: Proteasome subunit alpha (259 aa).

This sequence belongs to the peptidase T1A family. As to quaternary structure, the 20S proteasome core is composed of 14 alpha and 14 beta subunits that assemble into four stacked heptameric rings, resulting in a barrel-shaped structure. The two inner rings, each composed of seven catalytic beta subunits, are sandwiched by two outer rings, each composed of seven alpha subunits. The catalytic chamber with the active sites is on the inside of the barrel. Has a gated structure, the ends of the cylinder being occluded by the N-termini of the alpha-subunits. Is capped at one or both ends by the proteasome regulatory ATPase, PAN.

The protein resides in the cytoplasm. The formation of the proteasomal ATPase PAN-20S proteasome complex, via the docking of the C-termini of PAN into the intersubunit pockets in the alpha-rings, triggers opening of the gate for substrate entry. Interconversion between the open-gate and close-gate conformations leads to a dynamic regulation of the 20S proteasome proteolysis activity. Its function is as follows. Component of the proteasome core, a large protease complex with broad specificity involved in protein degradation. This is Proteasome subunit alpha from Methanococcus vannielii (strain ATCC 35089 / DSM 1224 / JCM 13029 / OCM 148 / SB).